The following is a 381-amino-acid chain: Homoserine O-succinyltransferase (381 aa).

The AB hydrolase-1 domain occupies 45–360 (NAVLVCHALN…PHGHDAFLLD (316 aa)). The active-site Nucleophile is serine 151. Residue arginine 221 coordinates substrate. Active-site residues include aspartate 321 and histidine 354. Aspartate 355 serves as a coordination point for substrate.

Belongs to the AB hydrolase superfamily. MetX family. In terms of assembly, homodimer.

The protein resides in the cytoplasm. It catalyses the reaction L-homoserine + succinyl-CoA = O-succinyl-L-homoserine + CoA. Its pathway is amino-acid biosynthesis; L-methionine biosynthesis via de novo pathway; O-succinyl-L-homoserine from L-homoserine: step 1/1. Functionally, transfers a succinyl group from succinyl-CoA to L-homoserine, forming succinyl-L-homoserine. This chain is Homoserine O-succinyltransferase, found in Burkholderia cenocepacia (strain HI2424).